Reading from the N-terminus, the 1705-residue chain is ALK tyrosine kinase receptor (1705 aa).

The first 21 residues, 1–21, serve as a signal peptide directing secretion; it reads MIARILYFFLWSAAFLPELQC. The Extracellular portion of the chain corresponds to 22 to 1035; it reads ASQRTADALT…SLSHLALGLS (1014 aa). N-linked (GlcNAc...) asparagine glycosylation is found at Asn-40 and Asn-48. The tract at residues 54-76 is heparin-binding region; that stretch reads RIKRKTLSVDFAVPSLLRYYLAL. Residues Asn-124, Asn-259, Asn-334, Asn-434, Asn-442, Asn-458, Asn-484, Asn-578, Asn-590, and Asn-635 are each glycosylated (N-linked (GlcNAc...) asparagine). The 159-residue stretch at 486-644 folds into the MAM domain; sequence SYCSFGREDC…NFTLSMECFL (159 aa). A disulfide bridge connects residues Cys-694 and Cys-707. An N-linked (GlcNAc...) asparagine glycan is attached at Asn-717. A disulfide bond links Cys-788 and Cys-799. 2 N-linked (GlcNAc...) asparagine glycosylation sites follow: Asn-808 and Asn-881. The interval 842-892 is disordered; that stretch reads GGGRGYSSQSETPEEVMDRDPSIPGRNGKSGTAGGGGGWNDSAPVPQGGRP. A disulfide bridge connects residues Cys-903 and Cys-921. N-linked (GlcNAc...) asparagine glycosylation is present at Asn-979. Disulfide bonds link Cys-980–Cys-988 and Cys-983–Cys-997. Residues 980 to 1016 form an EGF-like region; that stretch reads CSHCESGDCHETSEGMVCYCDEELTLAPDGVSCINST. A glycan (N-linked (GlcNAc...) asparagine) is linked at Asn-1014. The chain crosses the membrane as a helical span at residues 1036–1056; that stretch reads VGTSALIAALLLAVSGVMIMY. Topologically, residues 1057-1705 are cytoplasmic; the sequence is RRKHTELQSI…KMEGHNATVL (649 aa). In terms of domain architecture, Protein kinase spans 1113-1389; that stretch reads ISLTRGLGHG…IDYCLQDPDV (277 aa). Residues 1119-1127 and Lys-1147 contribute to the ATP site; that span reads LGHGAFGEV. Asp-1246 (proton acceptor) is an active-site residue. Disordered stretches follow at residues 1395 to 1499, 1505 to 1524, 1532 to 1557, 1588 to 1613, and 1646 to 1681; these read PVEY…GHVN, AHSS…WNPT, QQQK…GQEQ, QQQQ…PAPT, and GLPM…DSRP. Residues 1484–1493 show a composition bias toward polar residues; that stretch reads KPSSTTSNAQ. 2 stretches are compositionally biased toward low complexity: residues 1532-1544 and 1588-1602; these read QQQK…AQRQ and QQQQ…LCRP. The segment covering 1603 to 1613 has biased composition (pro residues); it reads LLPPPPPPAPT.

It belongs to the protein kinase superfamily. Tyr protein kinase family. Insulin receptor subfamily. Homodimer; homodimerizes upon binding to alkal ligands (alkal1, alkal2a or alkal2b). In terms of tissue distribution, highly expressed in the developing central nervous system: highly expressed in brain, with much lower expression in heart, caudal fin and testis.

The protein resides in the cell membrane. The catalysed reaction is L-tyrosyl-[protein] + ATP = O-phospho-L-tyrosyl-[protein] + ADP + H(+). With respect to regulation, inhibited by ALK inhibitor TAE684. Functionally, receptor tyrosine kinase required for neurogenesis in the developing central nervous system. Following activation by alkal ligands (alkal1, alkal2a or alkal2b) at the cell surface, transduces an extracellular signal into an intracellular response. Ligand-binding to the extracellular domain induces tyrosine kinase activation, resulting in the activation of the mitogen-activated protein kinase (MAPK) pathway. Phosphorylates almost exclusively at the first tyrosine of the Y-x-x-x-Y-Y motif. This is ALK tyrosine kinase receptor from Danio rerio (Zebrafish).